We begin with the raw amino-acid sequence, 197 residues long: Probable GTP-binding protein EngB (197 aa).

One can recognise an EngB-type G domain in the interval 26-197; it reads DLPEIALAGR…TSWDAILESL (172 aa). GTP contacts are provided by residues 34 to 41, 61 to 65, 79 to 82, 146 to 149, and 178 to 180; these read GRSNVGKS, GKTQS, DVPG, TKAD, and FSS. Mg(2+) contacts are provided by Ser-41 and Thr-63.

This sequence belongs to the TRAFAC class TrmE-Era-EngA-EngB-Septin-like GTPase superfamily. EngB GTPase family. It depends on Mg(2+) as a cofactor.

Functionally, necessary for normal cell division and for the maintenance of normal septation. This is Probable GTP-binding protein EngB from Streptococcus mutans serotype c (strain ATCC 700610 / UA159).